The following is a 91-amino-acid chain: Small ribosomal subunit protein uS19 (91 aa).

It belongs to the universal ribosomal protein uS19 family.

Its function is as follows. Protein S19 forms a complex with S13 that binds strongly to the 16S ribosomal RNA. The protein is Small ribosomal subunit protein uS19 of Metamycoplasma arthritidis (strain 158L3-1) (Mycoplasma arthritidis).